A 451-amino-acid polypeptide reads, in one-letter code: Trigger factor (451 aa).

Residues aspartate 165 to leucine 250 form the PPIase FKBP-type domain.

It belongs to the FKBP-type PPIase family. Tig subfamily.

The protein resides in the cytoplasm. The catalysed reaction is [protein]-peptidylproline (omega=180) = [protein]-peptidylproline (omega=0). Involved in protein export. Acts as a chaperone by maintaining the newly synthesized protein in an open conformation. Functions as a peptidyl-prolyl cis-trans isomerase. The protein is Trigger factor of Helicobacter acinonychis (strain Sheeba).